The following is a 357-amino-acid chain: Queuosine-tRNA galactosyltransferase (357 aa).

Belongs to the glycosyltransferase 2 family.

It localises to the cytoplasm. It catalyses the reaction queuosine(34) in tRNA(Tyr) + UDP-alpha-D-galactose = O-5''-beta-D-galactosylqueuosine(34) in tRNA(Tyr) + UDP + H(+). In terms of biological role, glycosyltransferase that specifically catalyzes galactosylation of cytoplasmic tRNA(Tyr) modified with queuosine at position 34 (queuosine(34)). Galactosylates the cyclopentene hydroxyl group of queuosine(34) in tRNA(Tyr) to form galactosyl-queuosine(34). Mannosylation of queuosine(34) in tRNA(Tyr) is required to slow-down elongation at cognate codons UAC and suppress stop codon readthrough, thereby regulating protein translation. The polypeptide is Queuosine-tRNA galactosyltransferase (Rattus norvegicus (Rat)).